We begin with the raw amino-acid sequence, 447 residues long: Phosphoglucosamine mutase (447 aa).

S103 (phosphoserine intermediate) is an active-site residue. Residues S103, D242, D244, and D246 each coordinate Mg(2+). S103 carries the phosphoserine modification.

Belongs to the phosphohexose mutase family. Mg(2+) serves as cofactor. Post-translationally, activated by phosphorylation.

The enzyme catalyses alpha-D-glucosamine 1-phosphate = D-glucosamine 6-phosphate. Catalyzes the conversion of glucosamine-6-phosphate to glucosamine-1-phosphate. The sequence is that of Phosphoglucosamine mutase from Jannaschia sp. (strain CCS1).